The following is a 1526-amino-acid chain: uncharacterized protein (1526 aa).

WD repeat units lie at residues Cys334–Ser376, Lys862–Thr901, Gly904–Lys945, Gly946–Ile985, Gly988–Ile1027, Gly1030–Thr1069, Gly1072–Thr1111, Gly1114–Thr1153, Gly1156–Ile1195, Gly1198–Thr1237, Gly1240–Thr1279, Gly1282–Thr1321, Gly1324–Thr1363, Gly1366–Thr1405, Gly1408–Thr1447, and Gly1450–Lys1491. The region spanning Met823–Lys862 is the Pentapeptide repeat domain.

This is an uncharacterized protein from Nostoc sp. (strain PCC 7120 / SAG 25.82 / UTEX 2576).